The following is a 509-amino-acid chain: Poly(A) RNA polymerase GLD2-B (509 aa).

Residues 88 to 125 form a disordered region; that stretch reads PGSPPSSFQNRKRRSDEGNSPYDVKRQRFQSPQEQTVN. The span at 116 to 125 shows a compositional bias: polar residues; that stretch reads FQSPQEQTVN. Mg(2+) is bound by residues aspartate 240 and aspartate 242. One can recognise a PAP-associated domain in the interval 409-462; it reads LGDLLLGFLKYFAVEFDWSKDIISLREAKALPRTDDYEWRNKYICVEEPFDGSN.

Belongs to the DNA polymerase type-B-like family. GLD2 subfamily. In terms of assembly, component of a complex at least composed of cpeb1, cpsf1, tent2/gld2, pabpc1/ePAB, parn and sympk. Following oocyte maturation, parn is expelled from the complex. Interacts with rbfox2. Interacts with sympk. Mg(2+) is required as a cofactor. The cofactor is Mn(2+).

The protein localises to the cytoplasm. It catalyses the reaction RNA(n) + ATP = RNA(n)-3'-adenine ribonucleotide + diphosphate. Functionally, cytoplasmic poly(A) RNA polymerase that adds successive AMP monomers to the 3'-end of specific RNAs, forming a poly(A) tail. In contrast to the canonical nuclear poly(A) RNA polymerase, it only adds poly(A) to selected cytoplasmic mRNAs during oocyte maturation. Plays a central role during oocyte maturation by mediating polyadenylation of dormant mRNAs, which contain 5'AAUAAA-3' sequence in their 3'-UTR. In immature oocytes, polyadenylation of poly(A) tails is counteracted by the ribonuclease parn. During maturation parn is excluded from the ribonucleoprotein complex, allowing poly(A) elongation and activation of mRNAs. May not play a role in replication-dependent histone mRNA degradation. The sequence is that of Poly(A) RNA polymerase GLD2-B from Xenopus laevis (African clawed frog).